A 651-amino-acid chain; its full sequence is Bromodomain-containing protein 7 (651 aa).

A Glycyl lysine isopeptide (Lys-Gly) (interchain with G-Cter in SUMO2) cross-link involves residue Lys21. The span at 35–45 (TELSTGSSGHD) shows a compositional bias: polar residues. Residues 35–132 (TELSTGSSGH…SSLAKQEEVE (98 aa)) form a disordered region. Over residues 47–57 (SLFEDKNDHDK) the composition is skewed to basic and acidic residues. A Glycyl lysine isopeptide (Lys-Gly) (interchain with G-Cter in SUMO2) cross-link involves residue Lys52. A compositionally biased stretch (basic residues) spans 58–69 (HKDRKRKKRKKG). The Nuclear localization signal motif lies at 65–96 (KRKKGEKQIPGEEKGRKRRRVKEDKKKRDRDR). Positions 70–106 (EKQIPGEEKGRKRRRVKEDKKKRDRDRVENEAEKDLQ) are enriched in basic and acidic residues. Glycyl lysine isopeptide (Lys-Gly) (interchain with G-Cter in SUMO2) cross-links involve residues Lys127, Lys186, Lys197, Lys201, Lys212, and Lys241. The Bromo domain maps to 131–235 (VEQTPLQEAL…HSGMKILSQE (105 aa)). The interval 253–301 (TRKQKDGTDTSQSGEDGGCWQREREDSGDAEAHAFKSPSKENKKKDKDM) is disordered. A compositionally biased stretch (basic and acidic residues) spans 273 to 301 (QREREDSGDAEAHAFKSPSKENKKKDKDM). Phosphoserine occurs at positions 279 and 289. Glycyl lysine isopeptide (Lys-Gly) (interchain with G-Cter in SUMO2) cross-links involve residues Lys305 and Lys307. Position 328 is an N6-acetyllysine (Lys328). Lys344 participates in a covalent cross-link: Glycyl lysine isopeptide (Lys-Gly) (interchain with G-Cter in SUMO2). A Phosphoserine modification is found at Ser380. Residue Lys389 forms a Glycyl lysine isopeptide (Lys-Gly) (interchain with G-Cter in SUMO2) linkage. A Phosphoserine modification is found at Ser482. Thr514 bears the Phosphothreonine mark. Residues 536-567 (SEEAEIFQKKLDETTRLLRELQEAQNERLSTR) are a coiled coil. The residue at position 621 (Ser621) is a Phosphoserine.

Interacts with TRIM24, PTPN13 and DVL1. Identified in a complex with SMARCA4/BRG1, SMARCC1/BAF155, SMARCE1/BAF57, DPF2/BAF45D and ARID2, subunits of the SWI/SNF-B (PBAF) chromatin remodeling complex. Interacts with IRF2 and HNRPUL1. Interacts (via N-terminus) with TP53. Interacts (via C-terminus) with EP300. Interacts with BRCA1. Interacts (via bromo domain) with histone H3 (via N-terminus) acetylated at 'Lys-14' (H3K14ac). Has low affinity for histone H3 acetylated at 'Lys-9' (H3K9ac). Has the highest affinity for histone H3 that is acetylated both at 'Lys-9' (H3K9ac) and at 'Lys-14' (H3K14ac). Has very low affinity for non-acetylated histone H3. Interacts (via bromo domain) with histone H4 (via N-terminus) acetylated at 'Lys-8' (H3K8ac) (in vitro).

The protein localises to the nucleus. The protein resides in the chromosome. In terms of biological role, acts both as coactivator and as corepressor. May play a role in chromatin remodeling. Activator of the Wnt signaling pathway in a DVL1-dependent manner by negatively regulating the GSK3B phosphotransferase activity. Induces dephosphorylation of GSK3B at 'Tyr-216'. Down-regulates TRIM24-mediated activation of transcriptional activation by AR. Transcriptional corepressor that down-regulates the expression of target genes. Binds to target promoters, leading to increased histone H3 acetylation at 'Lys-9' (H3K9ac). Binds to the ESR1 promoter. Recruits BRCA1 and POU2F1 to the ESR1 promoter. Coactivator for TP53-mediated activation of transcription of a set of target genes. Required for TP53-mediated cell-cycle arrest in response to oncogene activation. Promotes acetylation of TP53 at 'Lys-382', and thereby promotes efficient recruitment of TP53 to target promoters. Inhibits cell cycle progression from G1 to S phase. The polypeptide is Bromodomain-containing protein 7 (BRD7) (Homo sapiens (Human)).